Here is a 273-residue protein sequence, read N- to C-terminus: Proteasome subunit beta type-10 (273 aa).

Methionine 1 is subject to N-acetylmethionine. Positions 1–39 (MLKPALEPRGGFSFENCQRNASLERVLPGLKVPHARKTG) are cleaved as a propeptide — removed in mature form. Residue threonine 40 is the Nucleophile of the active site. Serine 230 bears the Phosphoserine mark.

Belongs to the peptidase T1B family. In terms of assembly, the 26S proteasome consists of a 20S proteasome core and two 19S regulatory subunits. The 20S proteasome core is composed of 28 subunits that are arranged in four stacked rings, resulting in a barrel-shaped structure. The two end rings are each formed by seven alpha subunits, and the two central rings are each formed by seven beta subunits. The catalytic chamber with the active sites is on the inside of the barrel. Component of the immunoproteasome, where it displaces the equivalent housekeeping subunit PSMB7. Component of the spermatoproteasome, a form of the proteasome specifically found in testis. As to quaternary structure, (Microbial infection) Interacts with HIV-1 TAT protein. Post-translationally, autocleaved. The resulting N-terminal Thr residue of the mature subunit is responsible for the nucleophile proteolytic activity.

It localises to the cytoplasm. It is found in the nucleus. It carries out the reaction Cleavage of peptide bonds with very broad specificity.. The proteasome is a multicatalytic proteinase complex which is characterized by its ability to cleave peptides with Arg, Phe, Tyr, Leu, and Glu adjacent to the leaving group at neutral or slightly basic pH. The proteasome has an ATP-dependent proteolytic activity. This subunit is involved in antigen processing to generate class I binding peptides. This chain is Proteasome subunit beta type-10 (PSMB10), found in Homo sapiens (Human).